A 157-amino-acid polypeptide reads, in one-letter code: Small ribosomal subunit protein uS7 (157 aa).

It belongs to the universal ribosomal protein uS7 family. As to quaternary structure, part of the 30S ribosomal subunit. Contacts proteins S9 and S11.

Its function is as follows. One of the primary rRNA binding proteins, it binds directly to 16S rRNA where it nucleates assembly of the head domain of the 30S subunit. Is located at the subunit interface close to the decoding center, probably blocks exit of the E-site tRNA. The protein is Small ribosomal subunit protein uS7 of Borrelia turicatae (strain 91E135).